A 278-amino-acid polypeptide reads, in one-letter code: HTH-type transcriptional activator RhaS (278 aa).

The 99-residue stretch at 174-272 (NLLLAWLEDH…NWSPRDIRQG (99 aa)) folds into the HTH araC/xylS-type domain. 2 consecutive DNA-binding regions (H-T-H motif) follow at residues 191–212 (DAVA…KQKT) and 239–262 (VTDI…RREF).

Binds DNA as a dimer.

The protein resides in the cytoplasm. In terms of biological role, activates expression of the rhaBAD and rhaT operons. This Escherichia coli O45:K1 (strain S88 / ExPEC) protein is HTH-type transcriptional activator RhaS.